A 263-amino-acid chain; its full sequence is 3-methyl-2-oxobutanoate hydroxymethyltransferase (263 aa).

Mg(2+) contacts are provided by aspartate 45 and aspartate 84. 3-methyl-2-oxobutanoate contacts are provided by residues 45–46, aspartate 84, and lysine 112; that span reads DS. Glutamate 114 contributes to the Mg(2+) binding site. Glutamate 181 (proton acceptor) is an active-site residue.

Belongs to the PanB family. As to quaternary structure, homodecamer; pentamer of dimers. The cofactor is Mg(2+).

The protein resides in the cytoplasm. It carries out the reaction 3-methyl-2-oxobutanoate + (6R)-5,10-methylene-5,6,7,8-tetrahydrofolate + H2O = 2-dehydropantoate + (6S)-5,6,7,8-tetrahydrofolate. It functions in the pathway cofactor biosynthesis; (R)-pantothenate biosynthesis; (R)-pantoate from 3-methyl-2-oxobutanoate: step 1/2. Its function is as follows. Catalyzes the reversible reaction in which hydroxymethyl group from 5,10-methylenetetrahydrofolate is transferred onto alpha-ketoisovalerate to form ketopantoate. This chain is 3-methyl-2-oxobutanoate hydroxymethyltransferase, found in Proteus mirabilis (strain HI4320).